Here is a 477-residue protein sequence, read N- to C-terminus: Ribulose bisphosphate carboxylase large chain (477 aa).

Residues 1 to 2 constitute a propeptide that is removed on maturation; it reads MS. At P3 the chain carries N-acetylproline. N6,N6,N6-trimethyllysine is present on K14. T173 provides a ligand contact to substrate. K175 serves as the catalytic Proton acceptor. K177 provides a ligand contact to substrate. K201, D203, and E204 together coordinate Mg(2+). K201 is modified (N6-carboxylysine). H294 (proton acceptor) is an active-site residue. Positions 295, 327, and 379 each coordinate substrate.

Belongs to the RuBisCO large chain family. Type I subfamily. As to quaternary structure, heterohexadecamer of 8 large chains and 8 small chains; disulfide-linked. The disulfide link is formed within the large subunit homodimers. Mg(2+) serves as cofactor. The disulfide bond which can form in the large chain dimeric partners within the hexadecamer appears to be associated with oxidative stress and protein turnover.

Its subcellular location is the plastid. It is found in the chloroplast. The catalysed reaction is 2 (2R)-3-phosphoglycerate + 2 H(+) = D-ribulose 1,5-bisphosphate + CO2 + H2O. It catalyses the reaction D-ribulose 1,5-bisphosphate + O2 = 2-phosphoglycolate + (2R)-3-phosphoglycerate + 2 H(+). Its function is as follows. RuBisCO catalyzes two reactions: the carboxylation of D-ribulose 1,5-bisphosphate, the primary event in carbon dioxide fixation, as well as the oxidative fragmentation of the pentose substrate in the photorespiration process. Both reactions occur simultaneously and in competition at the same active site. The protein is Ribulose bisphosphate carboxylase large chain of Gerbera jamesonii (Transvaal daisy).